Here is a 336-residue protein sequence, read N- to C-terminus: tRNA N6-adenosine threonylcarbamoyltransferase (336 aa).

Fe cation contacts are provided by H114 and H118. Residues 136 to 140 (LVSGG), D169, G182, D186, and N275 each bind substrate. D301 is a binding site for Fe cation.

The protein belongs to the KAE1 / TsaD family. Fe(2+) serves as cofactor.

The protein localises to the cytoplasm. It catalyses the reaction L-threonylcarbamoyladenylate + adenosine(37) in tRNA = N(6)-L-threonylcarbamoyladenosine(37) in tRNA + AMP + H(+). In terms of biological role, required for the formation of a threonylcarbamoyl group on adenosine at position 37 (t(6)A37) in tRNAs that read codons beginning with adenine. Is involved in the transfer of the threonylcarbamoyl moiety of threonylcarbamoyl-AMP (TC-AMP) to the N6 group of A37, together with TsaE and TsaB. TsaD likely plays a direct catalytic role in this reaction. The chain is tRNA N6-adenosine threonylcarbamoyltransferase from Streptococcus pneumoniae serotype 2 (strain D39 / NCTC 7466).